A 277-amino-acid polypeptide reads, in one-letter code: MEARPCSGVIFTDLDNTLVGPGGEAGEAGEVYLEALDLGYRVVPVTSKSIYEIVELWDSIGVPPGERIALAESGGAIYGPRGSLARPTGFNSEVGLEYTALGKPLASIDALLDSLAETCGAVRLSKADATEAQLITGLPRERAALAARREYLEVIWSRSQECLDTILSTALRYRELTYVHRAPRTVQIAAHRGKGMAIDAALQEPLLRPCAKVVVTAGDSSHDIPIIERGMLAFRVDYNRDWSRLVKPIYMVIPYEAPKAWTMLIETVKTRSNTPSL.

The active-site Nucleophile is Asp13. Asp13, Asp15, and Asp219 together coordinate Mg(2+).

It belongs to the HAD-like hydrolase superfamily. MPGP family. It depends on Mg(2+) as a cofactor.

It localises to the cytoplasm. It carries out the reaction 2-O-(alpha-D-mannosyl)-3-phosphoglycerate + H2O = (2R)-2-O-(alpha-D-mannosyl)-glycerate + phosphate. It functions in the pathway carbohydrate biosynthesis; 2-(alpha-D-mannosyl)-D-glycerate biosynthesis; 2-(alpha-D-mannosyl)-D-glycerate from GDP-alpha-D-mannose (MPG route): step 2/2. In terms of biological role, hydrolyzes mannosyl-3-phosphoglycerate (MPG) to form the osmolyte mannosylglycerate (MG). In Aeropyrum pernix (strain ATCC 700893 / DSM 11879 / JCM 9820 / NBRC 100138 / K1), this protein is Mannosyl-3-phosphoglycerate phosphatase.